Here is a 742-residue protein sequence, read N- to C-terminus: Transcription factor FFUJ_09177 (742 aa).

The segment at residues 15–41 (CVSCARSKQRCDGHSPCGRCSLKNLDC) is a DNA-binding region (zn(2)-C6 fungal-type). 2 disordered regions span residues 50 to 80 (GQNSTRGASPQSPSASRESYSQNTLPVVQSQ) and 218 to 244 (HSLDISSYQGQSNQTSPETTSHSSVRD). The span at 218–240 (HSLDISSYQGQSNQTSPETTSHS) shows a compositional bias: polar residues.

The protein localises to the nucleus. Its function is as follows. Transcription factor; part of the DMATS1 gene cluster that mediates the biosynthesis of a reversely N-prenylated monomeric L-tryptophan (r-N-DMAT). Seems not to regulate the expression of the DMATS1 cluster. The protein is Transcription factor FFUJ_09177 of Gibberella fujikuroi (strain CBS 195.34 / IMI 58289 / NRRL A-6831) (Bakanae and foot rot disease fungus).